A 1910-amino-acid polypeptide reads, in one-letter code: Endoribonuclease dcr-1 (1910 aa).

In terms of domain architecture, Helicase ATP-binding spans 20-201 (LLDKATKKNT…KLMEQLKKLE (182 aa)). 33–40 (LGTGSGKT) provides a ligand contact to ATP. Residues 145–148 (DECH) carry the DEAH box motif. Positions 371–542 (EFQKERMKLE…TVNNPIEDDS (172 aa)) constitute a Helicase C-terminal domain. The 97-residue stretch at 571–667 (AIALINRYCS…LPKGRESIAK (97 aa)) folds into the Dicer dsRNA-binding fold domain. The region spanning 845–1003 (YVSEVVANME…LVPELMDIHP (159 aa)) is the PAZ domain. Disordered regions lie at residues 951-988 (RIQNQPRRSRTVSNSSTSNIPQASASDSKESNTSVPHS), 1227-1248 (TASSSLSQTVQESTVSPPKQLT), and 1272-1309 (LEMSEDMEKPRRLEDTVNLEDYGDDQENQEDENTPTNF). 2 stretches are compositionally biased toward polar residues: residues 970 to 988 (IPQASASDSKESNTSVPHS) and 1227 to 1245 (TASSSLSQTVQESTVSPPK). A coiled-coil region spans residues 1245 to 1280 (KQLTKEEEQFKKLQNDLLKQAKERLEALEMSEDMEK). Over residues 1272–1286 (LEMSEDMEKPRRLED) the composition is skewed to basic and acidic residues. Acidic residues predominate over residues 1288–1304 (VNLEDYGDDQENQEDEN). RNase III domains lie at 1381-1589 (VSHI…LTLG) and 1643-1805 (FTQL…LDSG). 3 residues coordinate Mg(2+): glutamate 1682, aspartate 1791, and glutamate 1794. Positions 1833 to 1896 (SPIRELMEFE…AKRALKYLHQ (64 aa)) constitute a DRBM domain.

This sequence belongs to the helicase family. Dicer subfamily. As to quaternary structure, component of the ERI/DICER complex at least composed of dcr-1, rrf-3 and eri-1. Interacts with pir-1. Requires Mg(2+) as cofactor. Mn(2+) serves as cofactor.

Its function is as follows. Component of the ERI/DICER complex which is involved in processing amplified double-stranded RNA (dsRNA) intermediates during small-RNA-mediated gene-silencing or RNA interference (RNAi). Involved in cleaving dsRNA in the RNAi pathway. It produces 21 to 23 bp dsRNAs (siRNAs) which target the selective destruction of homologous RNAs. Seems to process the precursor of the small temporal RNA let-7 which is involved in developmental timing. Required for avoidance behavior induced by small RNAs derived from pathogenic bacteria such as P.aeruginosa. Involved in innate immunity through its role in small RNA processing. TDCR-1 acts as a deoxyribonuclease (DNase) initiating DNA fragmentation during apoptosis, upstream of nucleases cps-6, crn-2 and nuc-1. This Caenorhabditis elegans protein is Endoribonuclease dcr-1.